The following is a 139-amino-acid chain: uncharacterized protein (139 aa).

It is found in the mitochondrion. This is an uncharacterized protein from Marchantia polymorpha (Common liverwort).